Consider the following 188-residue polypeptide: dCTP deaminase (188 aa).

109-114 (KSTYAR) lines the dCTP pocket. Glutamate 135 (proton donor/acceptor) is an active-site residue. Glutamine 154, tyrosine 168, and glutamine 178 together coordinate dCTP.

It belongs to the dCTP deaminase family. In terms of assembly, homotrimer.

It carries out the reaction dCTP + H2O + H(+) = dUTP + NH4(+). It participates in pyrimidine metabolism; dUMP biosynthesis; dUMP from dCTP (dUTP route): step 1/2. Functionally, catalyzes the deamination of dCTP to dUTP. The chain is dCTP deaminase from Helicobacter acinonychis (strain Sheeba).